The primary structure comprises 39 residues: LIM/homeobox protein xLIM-2B (39 aa).

Residues 1–39 (KAKQLETLKAAFAATPKPTRHIREQLAQETGLNMRVIQV) constitute a DNA-binding region (homeobox).

It localises to the nucleus. This Xenopus laevis (African clawed frog) protein is LIM/homeobox protein xLIM-2B (lim2b).